We begin with the raw amino-acid sequence, 657 residues long: Zinc finger CCCH domain-containing protein 50 (657 aa).

ANK repeat units lie at residues Glu68–Val97 and Asp104–Thr136. Low complexity predominate over residues Ser176–Pro206. The interval Ser176–Leu222 is disordered. C3H1-type zinc fingers lie at residues Pro274–Phe302 and Tyr311–Glu333. The segment at Tyr507–Gly566 is disordered. Polar residues predominate over residues Gln549 to Trp562.

The protein is Zinc finger CCCH domain-containing protein 50 of Oryza sativa subsp. japonica (Rice).